The primary structure comprises 146 residues: Hemoglobin subunit beta (146 aa).

Residue Val-1 is modified to N-acetylvaline. The 145-residue stretch at 2–146 folds into the Globin domain; it reads HLTGEEKSAV…VANALAHKYH (145 aa). Thr-12 bears the Phosphothreonine mark. Ser-44 is subject to Phosphoserine. Lys-59 is modified (N6-acetyllysine). Heme b is bound at residue His-63. Lys-82 bears the N6-acetyllysine mark. His-92 contributes to the heme b binding site. Residue Cys-93 is modified to S-nitrosocysteine. At Lys-144 the chain carries N6-acetyllysine.

It belongs to the globin family. Heterotetramer of two alpha chains and two beta chains. As to expression, red blood cells.

Functionally, involved in oxygen transport from the lung to the various peripheral tissues. In Leontocebus fuscicollis (Brown-mantled tamarin), this protein is Hemoglobin subunit beta (HBB).